The primary structure comprises 217 residues: Probable transaldolase (217 aa).

Residue K83 is the Schiff-base intermediate with substrate of the active site.

It belongs to the transaldolase family. Type 3B subfamily.

The protein localises to the cytoplasm. The catalysed reaction is D-sedoheptulose 7-phosphate + D-glyceraldehyde 3-phosphate = D-erythrose 4-phosphate + beta-D-fructose 6-phosphate. It participates in carbohydrate degradation; pentose phosphate pathway; D-glyceraldehyde 3-phosphate and beta-D-fructose 6-phosphate from D-ribose 5-phosphate and D-xylulose 5-phosphate (non-oxidative stage): step 2/3. In terms of biological role, transaldolase is important for the balance of metabolites in the pentose-phosphate pathway. The sequence is that of Probable transaldolase from Bartonella tribocorum (strain CIP 105476 / IBS 506).